A 274-amino-acid chain; its full sequence is Diaminopimelate epimerase (274 aa).

Positions 11, 44, and 64 each coordinate substrate. Cys-73 (proton donor) is an active-site residue. Substrate contacts are provided by residues 74–75 (GN), Asn-157, Asn-190, and 208–209 (ER). Cys-217 acts as the Proton acceptor in catalysis. Residue 218-219 (GS) participates in substrate binding.

Belongs to the diaminopimelate epimerase family. In terms of assembly, homodimer.

The protein localises to the cytoplasm. The enzyme catalyses (2S,6S)-2,6-diaminopimelate = meso-2,6-diaminopimelate. The protein operates within amino-acid biosynthesis; L-lysine biosynthesis via DAP pathway; DL-2,6-diaminopimelate from LL-2,6-diaminopimelate: step 1/1. In terms of biological role, catalyzes the stereoinversion of LL-2,6-diaminopimelate (L,L-DAP) to meso-diaminopimelate (meso-DAP), a precursor of L-lysine and an essential component of the bacterial peptidoglycan. This is Diaminopimelate epimerase from Cronobacter sakazakii (strain ATCC BAA-894) (Enterobacter sakazakii).